Here is a 1218-residue protein sequence, read N- to C-terminus: Protein dispatched (1218 aa).

Residues 21–41 form a helical membrane-spanning segment; it reads YLVVVSIAVYCVACIIVALVL. Residues 99 to 135 are disordered; that stretch reads VETKLHPNHRRRKNKHKNRNKNKRRKEQNQSSHEHHD. Positions 104–124 are enriched in basic residues; sequence HPNHRRRKNKHKNRNKNKRRK. 6 N-linked (GlcNAc...) asparagine glycosylation sites follow: asparagine 127, asparagine 176, asparagine 197, asparagine 264, asparagine 319, and asparagine 388. Residues 430 to 624 form the SSD domain; sequence AMDLGLENEL…ITWLPASVSI (195 aa). The next 6 membrane-spanning stretches (helical) occupy residues 443–463, 473–493, 504–524, 570–590, 598–618, and 670–690; these read LLLTDVWLVSLGGTFVMASVW, LMSCVAICFSLGLAYFFYAIV, LLAVVVIIGIGADDVFLFLKI, AAASMFVTSLTTAGAFYASYS, CFGIFAGTVVVTNYLLMITWL, and AYLWLLIFGALGASSAVIVFW. Asparagine 767, asparagine 883, and asparagine 891 each carry an N-linked (GlcNAc...) asparagine glycan. Transmembrane regions (helical) follow at residues 975–995, 996–1016, 1019–1039, 1058–1078, and 1087–1107; these read LAVLLCFTVNILISIYAVLTV, SLSIFNTVAVLILLGWQLNIL, IAVSTAIGLAVDFSLHYGIHY, IIGPTVMAATTTGLAGGIMMA, and IGVFLVVVMIVSWFYATFFLM.

The protein belongs to the dispatched family.

The protein localises to the membrane. Segment polarity protein which functions in hedgehog (Hh) signaling. Regulates the trafficking and the release of cholesterol-modified hedgehog protein from cells of the posterior compartment (P cells) and is hence required for the effective production of the Hh signal. This Drosophila melanogaster (Fruit fly) protein is Protein dispatched (disp).